A 338-amino-acid polypeptide reads, in one-letter code: MSDFDSNPFADPDLNNPFKDPSVTQVTRNVPPGLDEYNPFSDSRTPPPGNVKMPNVPSTQPAIMKPTEEHPAYTQIAKEHALAQAELLKRQEELERKAAELDRREREMQNLSQHGRKNNWPPLPGNFPVGPCFYQDFSVDIPVEFQKTVKIMYYLWMFHAVTLFLNIFGCLAWFCVDPSRGVDFGLSILWFLLFTPCSFVCWYRPLYGAFRSDSSFRFFVFFFVYICQFAVHVLQAAGFHNWGNCGWISSLTGLNQSIPVGIMMIIIAALFTASAVISLVMFKKVHGLYRTTGASFEKAQQEFATGVMSNKTVQTAAANAASTAATSAAQNAFKGNQI.

Positions 1-63 (MSDFDSNPFA…PNVPSTQPAI (63 aa)) are disordered. At serine 2 the chain carries N-acetylserine. Serine 2 carries the post-translational modification Phosphoserine. Over 2-155 (SDFDSNPFAD…QKTVKIMYYL (154 aa)) the chain is Cytoplasmic. Phosphothreonine is present on threonine 45. A helical membrane pass occupies residues 156 to 176 (WMFHAVTLFLNIFGCLAWFCV). The Lumenal portion of the chain corresponds to 177-181 (DPSRG). A helical membrane pass occupies residues 182–202 (VDFGLSILWFLLFTPCSFVCW). The Cytoplasmic portion of the chain corresponds to 203-217 (YRPLYGAFRSDSSFR). Residues 218–238 (FFVFFFVYICQFAVHVLQAAG) traverse the membrane as a helical segment. Topologically, residues 239 to 261 (FHNWGNCGWISSLTGLNQSIPVG) are lumenal. A helical membrane pass occupies residues 262–282 (IMMIIIAALFTASAVISLVMF). At 283-338 (KKVHGLYRTTGASFEKAQQEFATGVMSNKTVQTAAANAASTAATSAAQNAFKGNQI) the chain is on the cytoplasmic side.

The protein belongs to the SCAMP family. As to quaternary structure, interacts with SYNRG, ITSN1 and SLC9A7.

Its subcellular location is the golgi apparatus. The protein localises to the trans-Golgi network membrane. The protein resides in the recycling endosome membrane. Functionally, functions in post-Golgi recycling pathways. Acts as a recycling carrier to the cell surface. This chain is Secretory carrier-associated membrane protein 1 (SCAMP1), found in Sus scrofa (Pig).